The following is a 174-amino-acid chain: Calcineurin subunit B (174 aa).

EF-hand domains lie at 21–56, 60–88, 90–125, and 131–166; these read EEIE…ASNP, RLFS…FSVH, NKEE…MVGT, and QLQQ…SNVT. Positions 34, 36, 38, 40, 45, 66, 68, 72, 77, 103, 105, 107, 109, 114, 144, 146, 148, 150, and 155 each coordinate Ca(2+).

Belongs to the calcineurin regulatory subunit family. Composed of a catalytic subunit (A) and a regulatory subunit (B).

Its function is as follows. Regulatory subunit of calcineurin, a calcium-dependent, calmodulin stimulated protein phosphatase. Confers calcium sensitivity. This is Calcineurin subunit B (cnb1) from Schizosaccharomyces pombe (strain 972 / ATCC 24843) (Fission yeast).